A 445-amino-acid polypeptide reads, in one-letter code: Phosphoglucosamine mutase (445 aa).

The active-site Phosphoserine intermediate is the S102. S102, D240, D242, and D244 together coordinate Mg(2+). S102 is modified (phosphoserine).

The protein belongs to the phosphohexose mutase family. It depends on Mg(2+) as a cofactor. Post-translationally, activated by phosphorylation.

The enzyme catalyses alpha-D-glucosamine 1-phosphate = D-glucosamine 6-phosphate. Catalyzes the conversion of glucosamine-6-phosphate to glucosamine-1-phosphate. This chain is Phosphoglucosamine mutase, found in Mycobacterium marinum (strain ATCC BAA-535 / M).